The primary structure comprises 346 residues: tRNA N6-adenosine threonylcarbamoyltransferase (346 aa).

Positions 111 and 115 each coordinate Fe cation. Residues 134 to 138, Asp-167, Gly-180, and Asn-277 contribute to the substrate site; that span reads LVSGG. Asp-305 contacts Fe cation.

This sequence belongs to the KAE1 / TsaD family. The cofactor is Fe(2+).

It is found in the cytoplasm. The catalysed reaction is L-threonylcarbamoyladenylate + adenosine(37) in tRNA = N(6)-L-threonylcarbamoyladenosine(37) in tRNA + AMP + H(+). Functionally, required for the formation of a threonylcarbamoyl group on adenosine at position 37 (t(6)A37) in tRNAs that read codons beginning with adenine. Is involved in the transfer of the threonylcarbamoyl moiety of threonylcarbamoyl-AMP (TC-AMP) to the N6 group of A37, together with TsaE and TsaB. TsaD likely plays a direct catalytic role in this reaction. The polypeptide is tRNA N6-adenosine threonylcarbamoyltransferase (Bordetella parapertussis (strain 12822 / ATCC BAA-587 / NCTC 13253)).